A 340-amino-acid polypeptide reads, in one-letter code: Glycerol-3-phosphate dehydrogenase [NAD(P)+] (340 aa).

Residues S14, F15, R35, and K108 each coordinate NADPH. Sn-glycerol 3-phosphate is bound by residues K108 and G136. A140 is a binding site for NADPH. Sn-glycerol 3-phosphate-binding residues include K191, D244, S254, R255, and N256. K191 serves as the catalytic Proton acceptor. R255 contributes to the NADPH binding site. E281 contacts NADPH.

It belongs to the NAD-dependent glycerol-3-phosphate dehydrogenase family.

Its subcellular location is the cytoplasm. The catalysed reaction is sn-glycerol 3-phosphate + NAD(+) = dihydroxyacetone phosphate + NADH + H(+). It catalyses the reaction sn-glycerol 3-phosphate + NADP(+) = dihydroxyacetone phosphate + NADPH + H(+). It functions in the pathway membrane lipid metabolism; glycerophospholipid metabolism. Functionally, catalyzes the reduction of the glycolytic intermediate dihydroxyacetone phosphate (DHAP) to sn-glycerol 3-phosphate (G3P), the key precursor for phospholipid synthesis. In Pseudomonas aeruginosa (strain ATCC 15692 / DSM 22644 / CIP 104116 / JCM 14847 / LMG 12228 / 1C / PRS 101 / PAO1), this protein is Glycerol-3-phosphate dehydrogenase [NAD(P)+].